A 260-amino-acid polypeptide reads, in one-letter code: Potassium inward rectifier (Kir)-like channel 3 (260 aa).

A disordered region spans residues 1 to 34 (MPMTPSEFKNRLLFGSLPRSSSDPTDLQFTEPNV). Over 1–68 (MPMTPSEFKN…EQSVSKSIAR (68 aa)) the chain is Cytoplasmic. The span at 18 to 31 (PRSSSDPTDLQFTE) shows a compositional bias: polar residues. The chain crosses the membrane as a helical span at residues 69 to 89 (QALALLVVYLSLGVLIYWLTL). The pore-forming intramembrane region spans 127–146 (DSFCFSVMMVTTVGFGDRAF). A helical transmembrane segment spans residues 153 to 173 (FLAAVWLLVSTLAVARAFLFL). At 174-260 (ADARADKRNR…LVDLTTATSV (87 aa)) the chain is on the cytoplasmic side. EF-hand domains follow at residues 190–225 (LGES…QMEK) and 229–256 (EDFI…DLTT). Residues Asp-203, Asp-205, Asp-207, Arg-209, Glu-214, Asp-242, Ser-246, Arg-248, and Asp-253 each contribute to the Ca(2+) site.

The protein belongs to the two pore domain potassium channel (TC 1.A.1.7) family. In terms of assembly, homotetramer. In terms of tissue distribution, expressed in hydathodes and the vascular tissues of roots, stems, leaves and flowers.

Its subcellular location is the vacuole membrane. Functionally, probable calcium-activated potassium channel. The polypeptide is Potassium inward rectifier (Kir)-like channel 3 (KCO3) (Arabidopsis thaliana (Mouse-ear cress)).